The chain runs to 431 residues: 3-deoxy-D-manno-octulosonic acid transferase (431 aa).

A helical; Signal-anchor transmembrane segment spans residues 5–27; sequence WLTSRLYDAFLVCAFFVSAPRIF. Glutamate 67 functions as the Proton acceptor in the catalytic mechanism. Residues 275–276, 315–317, and 342–345 contribute to the CMP site; these read PR, MGV, and NLLE.

This sequence belongs to the glycosyltransferase group 1 family. Glycosyltransferase 30 subfamily.

The protein resides in the cell inner membrane. It catalyses the reaction lipid IVA (E. coli) + CMP-3-deoxy-beta-D-manno-octulosonate = alpha-Kdo-(2-&gt;6)-lipid IVA (E. coli) + CMP + H(+). The catalysed reaction is alpha-Kdo-(2-&gt;6)-lipid IVA (E. coli) + CMP-3-deoxy-beta-D-manno-octulosonate = alpha-Kdo-(2-&gt;4)-alpha-Kdo-(2-&gt;6)-lipid IVA (E. coli) + CMP + H(+). The enzyme catalyses alpha-Kdo-(2-&gt;4)-alpha-Kdo-(2-&gt;6)-lipid IVA (E. coli) + CMP-3-deoxy-beta-D-manno-octulosonate = alpha-Kdo-(2-&gt;8)-alpha-Kdo-(2-&gt;4)-alpha-Kdo-(2-&gt;6)-lipid IVA (E. coli) + CMP + H(+). The protein operates within bacterial outer membrane biogenesis; LPS core biosynthesis. In terms of biological role, involved in lipopolysaccharide (LPS) biosynthesis. Catalyzes the transfer of three 3-deoxy-D-manno-octulosonate (Kdo) residues from CMP-Kdo to lipid IV(A), the tetraacyldisaccharide-1,4'-bisphosphate precursor of lipid A. Thus generates the genus-specific LPS epitope of Chlamydia, composed of the trisaccharide alpha-Kdo-(2-&gt;8)-alpha-Kdo-(2-&gt;4)-alpha-Kdo. The polypeptide is 3-deoxy-D-manno-octulosonic acid transferase (waaA) (Chlamydia trachomatis serovar D (strain ATCC VR-885 / DSM 19411 / UW-3/Cx)).